The primary structure comprises 135 residues: PTS system sorbose-specific EIIA component (135 aa).

Positions 1 to 131 (MVHAIFCAHG…CVVWQQPETV (131 aa)) constitute a PTS EIIA type-4 domain. His-9 (tele-phosphohistidine intermediate) is an active-site residue. Residue His-9 is modified to Phosphohistidine; by HPr.

The protein localises to the cytoplasm. The phosphoenolpyruvate-dependent sugar phosphotransferase system (PTS), a major carbohydrate active transport system, catalyzes the phosphorylation of incoming sugar substrates concomitant with their translocation across the cell membrane. The enzyme II SorABFM PTS system is involved in L-sorbose transport. In Klebsiella pneumoniae, this protein is PTS system sorbose-specific EIIA component.